The following is a 477-amino-acid chain: Zinc metalloproteinase/disintegrin (477 aa).

The signal sequence occupies residues 1 to 19 (MIQVLLVIICLAVPYQGSS). The propeptide occupies 20 to 186 (IILESGNVND…PIKKASQSNL (167 aa)). In terms of domain architecture, Peptidase M12B spans 192–388 (RYIELVIVAD…QKPQCILNKP (197 aa)). E195 and D279 together coordinate Ca(2+). 3 cysteine pairs are disulfide-bonded: C303–C383, C343–C367, and C345–C350. H328 contacts Zn(2+). The active site involves E329. Residues H332 and H338 each contribute to the Zn(2+) site. The Ca(2+) site is built by C383 and N386. The propeptide occupies 389 to 404 (LRTDTVSTPVSGNELL). The 82-residue stretch at 396–477 (TPVSGNELLE…AGCPRNPFHA (82 aa)) folds into the Disintegrin domain. Intrachain disulfides connect C410-C425, C412-C420, C419-C442, C433-C439, C438-C463, and C451-C470. The short motif at 455–457 (RGD) is the Cell attachment site element.

This sequence belongs to the venom metalloproteinase (M12B) family. P-II subfamily. P-IIa sub-subfamily. Monomer. Zn(2+) is required as a cofactor. Expressed by the venom gland.

The protein resides in the secreted. Functionally, impairs hemostasis in the envenomed animal. In terms of biological role, inhibits platelet aggregation induced by ADP, thrombin, platelet-activating factor and collagen. Acts by inhibiting fibrinogen interaction with platelet receptors GPIIb/GPIIIa (ITGA2B/ITGB3). The chain is Zinc metalloproteinase/disintegrin from Gloydius halys (Chinese water mocassin).